The primary structure comprises 345 residues: Biotin synthase (345 aa).

The region spanning 49–276 is the Radical SAM core domain; sequence NQVQMSTLLS…ASFVRLSAGR (228 aa). The [4Fe-4S] cluster site is built by C64, C68, and C71. 4 residues coordinate [2Fe-2S] cluster: C108, C139, C199, and R271.

Belongs to the radical SAM superfamily. Biotin synthase family. As to quaternary structure, homodimer. It depends on [4Fe-4S] cluster as a cofactor. [2Fe-2S] cluster is required as a cofactor.

The enzyme catalyses (4R,5S)-dethiobiotin + (sulfur carrier)-SH + 2 reduced [2Fe-2S]-[ferredoxin] + 2 S-adenosyl-L-methionine = (sulfur carrier)-H + biotin + 2 5'-deoxyadenosine + 2 L-methionine + 2 oxidized [2Fe-2S]-[ferredoxin]. It participates in cofactor biosynthesis; biotin biosynthesis; biotin from 7,8-diaminononanoate: step 2/2. Its function is as follows. Catalyzes the conversion of dethiobiotin (DTB) to biotin by the insertion of a sulfur atom into dethiobiotin via a radical-based mechanism. This chain is Biotin synthase, found in Nitrosococcus oceani (strain ATCC 19707 / BCRC 17464 / JCM 30415 / NCIMB 11848 / C-107).